A 363-amino-acid polypeptide reads, in one-letter code: Protein CPn_1058/CP_0792/CPj1058/CpB1100 (363 aa).

The signal sequence occupies residues 1–27 (MKLYQTLRGIVLVSTGCIFLGMHGGYA).

It belongs to the chlamydial CPn_1058/CT_355/TC_0634 family.

The polypeptide is Protein CPn_1058/CP_0792/CPj1058/CpB1100 (Chlamydia pneumoniae (Chlamydophila pneumoniae)).